Reading from the N-terminus, the 218-residue chain is MDKSESTSAGRNRRRRPRRGSRSASSSSDANFRVLSQQLSRLNKTLAAGRPTINHPTFVGSERCKPGYTFTSITLKPPKIDRGSYYGKRLLLPDSVTEYDKKLVSRIQIRVNPLPKFDSTVWVTVRKVPASSDLSVAAISAMFADGASPVLVHQYAASGVQANNKLLYDLSAMRADIGDMRKYAVLVYSKDDALETDELVLHVDVEHQRIPTSGVLPV.

M1 is subject to N-acetylmethionine; by host. Positions 1–10 are enriched in low complexity; the sequence is MDKSESTSAG. The tract at residues 1 to 30 is disordered; it reads MDKSESTSAGRNRRRRPRRGSRSASSSSDA. Positions 11–21 are enriched in basic residues; it reads RNRRRRPRRGS.

It belongs to the cucumovirus capsid protein family.

It is found in the virion. In terms of biological role, capsid protein. Probably binds RNA and plays a role in packaging. The chain is Capsid protein from Cucumis sativus (Cucumber).